A 432-amino-acid polypeptide reads, in one-letter code: Trigger factor (432 aa).

Positions 162-247 constitute a PPIase FKBP-type domain; sequence GDLVKFDYQG…VKEVQAPVLP (86 aa).

The protein belongs to the FKBP-type PPIase family. Tig subfamily.

The protein resides in the cytoplasm. It catalyses the reaction [protein]-peptidylproline (omega=180) = [protein]-peptidylproline (omega=0). Its function is as follows. Involved in protein export. Acts as a chaperone by maintaining the newly synthesized protein in an open conformation. Functions as a peptidyl-prolyl cis-trans isomerase. The sequence is that of Trigger factor from Thiobacillus denitrificans (strain ATCC 25259 / T1).